A 195-amino-acid chain; its full sequence is Probable nicotinate-nucleotide adenylyltransferase (195 aa).

This sequence belongs to the NadD family.

The catalysed reaction is nicotinate beta-D-ribonucleotide + ATP + H(+) = deamido-NAD(+) + diphosphate. Its pathway is cofactor biosynthesis; NAD(+) biosynthesis; deamido-NAD(+) from nicotinate D-ribonucleotide: step 1/1. Its function is as follows. Catalyzes the reversible adenylation of nicotinate mononucleotide (NaMN) to nicotinic acid adenine dinucleotide (NaAD). This Bordetella petrii (strain ATCC BAA-461 / DSM 12804 / CCUG 43448) protein is Probable nicotinate-nucleotide adenylyltransferase.